A 785-amino-acid polypeptide reads, in one-letter code: Tripartite terminase subunit 1 (785 aa).

The C3H1-type zinc-finger motif lies at 197–225; it reads CAVCFEELCVTANQGATIARRLADRICNH. Disordered stretches follow at residues 433–452 and 457–489; these read GGAA…GDRV and GARG…GDIA. 696 to 703 serves as a coordination point for ATP; it reads FASVYRCG.

Belongs to the herpesviridae TRM1 protein family. As to quaternary structure, associates with TRM2 and TRM3 to form the tripartite terminase complex. Interacts with portal protein.

The protein resides in the host nucleus. In terms of biological role, component of the molecular motor that translocates viral genomic DNA in empty capsid during DNA packaging. Forms a tripartite terminase complex together with TRM2 and TRM3 in the host cytoplasm. Once the complex reaches the host nucleus, it interacts with the capsid portal vertex. This portal forms a ring in which genomic DNA is translocated into the capsid. TRM1 carries an endonuclease activity that plays an important role for the cleavage of concatemeric viral DNA into unit length genomes. This chain is Tripartite terminase subunit 1, found in Human herpesvirus 1 (strain 17) (HHV-1).